A 67-amino-acid polypeptide reads, in one-letter code: Probable pilin MJ1400 (67 aa).

The propeptide occupies 1 to 13; sequence MKFIMKFIKSNKG. Positions 14-22 match the QXSXEXXXL motif; sequence QISLEFSLL.

The N-terminus is cleaved by the prepilin peptidase EppA, which recognizes the class III signal sequence.

Its subcellular location is the secreted. It is found in the cell surface. It localises to the fimbrium. The polypeptide is Probable pilin MJ1400 (Methanocaldococcus jannaschii (strain ATCC 43067 / DSM 2661 / JAL-1 / JCM 10045 / NBRC 100440) (Methanococcus jannaschii)).